Reading from the N-terminus, the 326-residue chain is 3-dehydrosphinganine reductase TSC10A (326 aa).

At methionine 1–leucine 7 the chain is on the lumenal side. A helical transmembrane segment spans residues phenylalanine 8–valine 28. At arginine 29 to asparagine 264 the chain is on the cytoplasmic side. NADPH is bound by residues glycine 46, serine 48, serine 49, glycine 50, arginine 71, lysine 75, and aspartate 97. The GXSXG motif lies at glycine 46 to glycine 50. Serine 174 functions as the Proton donor in the catalytic mechanism. Tyrosine 188 functions as the Proton acceptor in the catalytic mechanism. Residues tyrosine 188 and lysine 192 each contribute to the NADP(+) site. Lysine 192 acts as the Lowers pKa of active site Tyr in catalysis. A helical transmembrane segment spans residues phenylalanine 265–proline 285. The Lumenal portion of the chain corresponds to glutamine 286–serine 288. Residues phenylalanine 289–phenylalanine 309 form a helical membrane-spanning segment. Over glutamine 310–lysine 326 the chain is Cytoplasmic.

Belongs to the short-chain dehydrogenases/reductases (SDR) family. Expressed in roots, leaves, stems, flowers and siliques.

Its subcellular location is the endoplasmic reticulum membrane. The catalysed reaction is sphinganine + NADP(+) = 3-oxosphinganine + NADPH + H(+). It functions in the pathway lipid metabolism; sphingolipid metabolism. In terms of biological role, catalyzes the reduction of 3'-oxosphinganine (3-ketodihydrosphingosine/KDS) to sphinganine (dihydrosphingosine/DHS), the second step of de novo sphingolipid biosynthesis. In plants, sphingolipids seems to play a critical role in mineral ion homeostasis, most likely through their involvement in the ion transport functionalities of membrane systems in the root. Lacks stereospecificity and can also produce L-threo-DHS in addition to D-erythro-DHS. The protein is 3-dehydrosphinganine reductase TSC10A (TSC10A) of Arabidopsis thaliana (Mouse-ear cress).